The primary structure comprises 324 residues: Beta-ketoacyl-[acyl-carrier-protein] synthase III (324 aa).

Active-site residues include cysteine 114 and histidine 246. The segment at 247-251 (QANLR) is ACP-binding. The active site involves asparagine 276.

This sequence belongs to the thiolase-like superfamily. FabH family. As to quaternary structure, homodimer.

The protein localises to the cytoplasm. The enzyme catalyses malonyl-[ACP] + acetyl-CoA + H(+) = 3-oxobutanoyl-[ACP] + CO2 + CoA. The protein operates within lipid metabolism; fatty acid biosynthesis. Its function is as follows. Catalyzes the condensation reaction of fatty acid synthesis by the addition to an acyl acceptor of two carbons from malonyl-ACP. Catalyzes the first condensation reaction which initiates fatty acid synthesis and may therefore play a role in governing the total rate of fatty acid production. Possesses both acetoacetyl-ACP synthase and acetyl transacylase activities. Its substrate specificity determines the biosynthesis of branched-chain and/or straight-chain of fatty acids. The polypeptide is Beta-ketoacyl-[acyl-carrier-protein] synthase III (Campylobacter jejuni (strain RM1221)).